A 395-amino-acid polypeptide reads, in one-letter code: Transmembrane protein 79 (395 aa).

Residues 1-115 are disordered; that stretch reads MTEPETLALL…PPTKLEELPE (115 aa). At 1–204 the chain is on the cytoplasmic side; the sequence is MTEPETLALL…GREALRAVAS (204 aa). A helical transmembrane segment spans residues 205–225; sequence VGAALILFPCLLYGAYAFLPF. At 226-244 the chain is on the extracellular side; that stretch reads DAPRLPTMSSRLIYTLRCG. Residues 245 to 265 traverse the membrane as a helical segment; it reads VFATFPIVLGILVYGLSLLCF. The Cytoplasmic portion of the chain corresponds to 266 to 290; the sequence is AALRPFGEPRREVEIHRQYVAQSVQ. Residues 291–311 form a helical membrane-spanning segment; the sequence is LFILYFFNLAVLSTYLPQDAL. The Extracellular portion of the chain corresponds to 312-313; the sequence is KL. The chain crosses the membrane as a helical span at residues 314 to 334; that stretch reads LPLLTGLFAISRLIYWLTFAV. Residues 335-343 lie on the Cytoplasmic side of the membrane; it reads GRSFRGFGY. The chain crosses the membrane as a helical span at residues 344–364; it reads GLTFLPLLSMLLWNFYYMFVV. The Extracellular portion of the chain corresponds to 365-395; sequence EPERMLTASESRLDYPDHARSASDYRPRSRG.

It localises to the lysosome. It is found in the golgi apparatus. The protein localises to the trans-Golgi network. The protein resides in the membrane. In terms of biological role, contributes to the epidermal integrity and skin barrier function. Plays a role in the lamellar granule (LG) secretory system and in the stratum corneum (SC) epithelial cell formation. This Bos taurus (Bovine) protein is Transmembrane protein 79 (TMEM79).